The following is a 113-amino-acid chain: U11-theraphotoxin-Hhn1a (113 aa).

An N-terminal signal peptide occupies residues 1–21 (MNTVRVAFLLVFVLAVSLGQA). A propeptide spanning residues 22 to 74 (DKDENRMEMQEKTEQGKSYLDFAENLLLQKLEEPEAKLLEEDSEESRNSRQKR) is cleaved from the precursor. The span at 58–69 (KLLEEDSEESRN) shows a compositional bias: basic and acidic residues. Positions 58-83 (KLLEEDSEESRNSRQKRCIGEGVPCD) are disordered. Disulfide bonds link Cys75–Cys90, Cys82–Cys95, and Cys89–Cys110.

It belongs to the neurotoxin 14 (magi-1) family. 01 (HNTX-16) subfamily. In terms of tissue distribution, expressed by the venom gland.

It is found in the secreted. Probable ion channel inhibitor. This chain is U11-theraphotoxin-Hhn1a, found in Cyriopagopus hainanus (Chinese bird spider).